Reading from the N-terminus, the 70-residue chain is Virion membrane protein OPG139 (70 aa).

A helical transmembrane segment spans residues 1-21; that stretch reads MIGILLLIGICVAVTVAILYS. Residues 22–70 lie on the Virion surface side of the membrane; that stretch reads MYNKIKNSQNPNPSPNLNSPPPEPKNTKFVNNLEKDHISSLYNLVKSSV. Residues 30 to 50 are disordered; that stretch reads QNPNPSPNLNSPPPEPKNTKF. The span at 33 to 45 shows a compositional bias: pro residues; it reads NPSPNLNSPPPEP. Ser40 bears the Phosphoserine; by host mark.

This sequence belongs to the orthopoxvirus OPG139 family. In terms of processing, phosphorylated by a OPG054-independent mechanism.

The protein localises to the virion membrane. In terms of biological role, essential for the encapsidation of DNA into immature virions (IV) and the subsequent maturation of IV into mature virions (MV). The chain is Virion membrane protein OPG139 (OPG139) from Homo sapiens (Human).